The chain runs to 369 residues: Ribosomal RNA large subunit methyltransferase G (369 aa).

This sequence belongs to the methyltransferase superfamily. RlmG family.

Its subcellular location is the cytoplasm. The enzyme catalyses guanosine(1835) in 23S rRNA + S-adenosyl-L-methionine = N(2)-methylguanosine(1835) in 23S rRNA + S-adenosyl-L-homocysteine + H(+). Specifically methylates the guanine in position 1835 (m2G1835) of 23S rRNA. This Magnetococcus marinus (strain ATCC BAA-1437 / JCM 17883 / MC-1) protein is Ribosomal RNA large subunit methyltransferase G.